We begin with the raw amino-acid sequence, 302 residues long: Pathogenicity locus probable regulatory protein HrpS (302 aa).

The Sigma-54 factor interaction domain occupies 9 to 237 (DDLDAERVPN…LKAAAKRHVL (229 aa)). Residues 37-44 (GETGTGKD) and 99-108 (AQGGTLYLDE) contribute to the ATP site. The segment at residues 279 to 298 (IDAASLELDIPRRTLYRRIK) is a DNA-binding region (H-T-H motif).

Functionally, regulates the activation of the sigma factor HrpL which itself induces the expression of hprD as well as other hrp loci which are involved in plant pathogenicity, hrmA and avr genes. Probably interacts with sigma-54. The chain is Pathogenicity locus probable regulatory protein HrpS (hrpS) from Pseudomonas syringae pv. syringae.